The chain runs to 48 residues: uncharacterized protein (48 aa).

This is an uncharacterized protein from Escherichia coli (Bacteriophage HK022).